The chain runs to 2517 residues: Cullin-9 (2517 aa).

A Glycyl lysine isopeptide (Lys-Gly) (interchain with G-Cter in ubiquitin) cross-link involves residue K87. Over residues 276-288 (SPELGAGDQSSPC) the composition is skewed to polar residues. The segment at 276–296 (SPELGAGDQSSPCATREKSRG) is disordered. The CPH domain occupies 366-439 (RSEFSSRSGY…HWHMLEILGP (74 aa)). The segment covering 576-589 (SNEPSSSSTSRNHS) has biased composition (low complexity). Residues 576 to 639 (SNEPSSSSTS…TETPMAQSDS (64 aa)) are disordered. Acidic residues predominate over residues 593–609 (DPEEESKSEASFSEEET). Over residues 610–630 (ESLKAKAEAPKTEAEPTKTRT) the composition is skewed to basic and acidic residues. S976 bears the Phosphoserine mark. Positions 1143 to 1322 (PINIPFFDVF…RTCLFYTIRA (180 aa)) constitute a DOC domain. 1363–1370 (AAQALGKT) serves as a coordination point for ATP. Disordered regions lie at residues 1432-1466 (VEPP…VLPS) and 1664-1685 (DEEE…AEKE). Residues 1433 to 1443 (EPPPGPSPEPS) show a composition bias toward pro residues. Position 1457 is a phosphoserine (S1457). A coiled-coil region spans residues 1649 to 1691 (LFQLQRLDKLFLEQEDEEEKRLEEEEEEEEEEEAEKELFIEDP). Acidic residues predominate over residues 1664 to 1683 (DEEEKRLEEEEEEEEEEEAE). A Glycyl lysine isopeptide (Lys-Gly) (interchain with G-Cter in NEDD8) cross-link involves residue K1881. Residues 2066 to 2283 (RPDHCPVCVS…KDYYNCSAMV (218 aa)) are TRIAD supradomain. C2070, C2073, C2088, H2090, C2093, C2096, C2115, C2120, C2160, C2166, C2181, C2184, C2189, C2192, H2198, C2203, C2236, and C2239 together coordinate Zn(2+). The RING-type 1 zinc finger occupies 2070 to 2120 (CPVCVSPLGCDDDLPSLCCMHYCCKSCWNEYLTTRIEQNLVLNCTCPIADC). Residues 2140-2203 (SKYEKALLRG…FPEAHYPASC (64 aa)) form an IBR-type zinc finger. The RING-type 2; atypical zinc finger occupies 2236 to 2265 (CPSCQAPIEKNEGCLHMTCAKCNHGFCWRC). Residue C2249 is part of the active site. 6 residues coordinate Zn(2+): C2254, C2257, C2262, C2265, H2273, and C2279. The stretch at 2365 to 2385 (VEQQTENLELHTNALQILLEE) forms a coiled coil. S2436 carries the post-translational modification Phosphoserine. A disordered region spans residues 2442 to 2517 (WEAKGPNMPG…EEEDEDEAYD (76 aa)). Acidic residues-rich tracts occupy residues 2461 to 2499 (EAEE…ENLD) and 2506 to 2517 (GDEEEDEDEAYD).

Belongs to the cullin family. In terms of assembly, component of the Cul9-RING complex consisting of CUL9 and RBX1; the CUL9-RBX1 complex is a heterododecamer composed of six CUL9 and six RBX1 protomers. Interacts (via C-terminal TRIAD/RBR supradomain) with E2 ubiquitin-conjugating enzyme UBE2L3. Interacts with CUL7; the interaction with the CUL7 component of the 3M complex leads to inhibition of CUL9 activity. The CUL7-CUL9 heterodimer seems to interact specifically with TP53, likely via the CPH domain. Forms a complex with p53/TP53 in the cytoplasm of unstressed cells. Interacts with UBCH7 and UBCH8. In terms of processing, autoubiquitinated by the CUL9-RBX1 complex at Lys-87. Post-translationally, neddylated. Neddylation is mediated by E1 enzyme UBA3-NAE1 complex and E2 enzyme UBE2F. Structural rearrangment of the C-terminal TRIAD/RBR supradomain may play a role in neddylation and deneddylation. Ubiquitously expressed in all tissues with highest expression in testis brain and kidney.

The protein resides in the cytoplasm. Functionally, core component of a Cul9-RING ubiquitin-protein ligase complex composed of CUL9 and RBX1. The CUL9-RBX1 complex mediates ubiquitination and subsequent degradation of BIRC5 and is required to maintain microtubule dynamics and genome integrity. Acts downstream of the 3M complex, which inhibits the ubiquitination of BIRC5. The CUL9-RBX1 complex also mediates mono-ubiquitination of p53/TP53. Acts as a cytoplasmic anchor protein in p53/TP53-associated protein complex. Regulates the subcellular localization of p53/TP53 and its subsequent function. Ubiquitinates apurinic/apyrimidinic endodeoxyribonuclease APEX2. Ubiquitination by the CUL9-RBX1 complex is predominantly mediated by E2 ubiquitin-conjugating enzymes UBE2L3 and UBE2D2. This chain is Cullin-9 (CUL9), found in Homo sapiens (Human).